A 692-amino-acid polypeptide reads, in one-letter code: Transforming growth factor beta activator LRRC33 (692 aa).

A signal peptide spans 1–18; that stretch reads MELLPLWLCLGFHFLTVG. The Extracellular segment spans residues 19 to 650; it reads WRNRSGTATA…CKWERLDLGL (632 aa). Residue asparagine 21 is glycosylated (N-linked (GlcNAc...) asparagine). Residues 29–56 enclose the LRRNT domain; it reads ASQGVCKLVGGAADCRGQSLASVPSSLP. LRR repeat units follow at residues 58–79, 82–103, 106–127, 133–155, 158–179, 182–203, 206–227, 228–239, 251–272, and 273–294; these read HARMLTLDANPLKTLWNHSLQP, LLESLSLHSCHLERISRGAFQE, HLRSLVLGDNCLSENYEETAAA, GLRRLDLSGNALTEDMAALMLQN, SLRSVSLAGNTIMRLDDSVFEG, RLRELDLQRNYIFEIEGGAFDG, ELRHLNLAFNNLPCIVDFGLTR, LRVLNVSYNVLE, ELETLDLSHNQLLFFPLLPQYS, and KLRTLLLRDNNMGFYRDLYNTS. Asparagine 74 is a glycosylation site (N-linked (GlcNAc...) asparagine). An N-linked (GlcNAc...) asparagine glycan is attached at asparagine 155. Asparagine 232 carries N-linked (GlcNAc...) asparagine glycosylation. N-linked (GlcNAc...) asparagine glycosylation is found at asparagine 292, asparagine 309, and asparagine 312. LRR repeat units follow at residues 329–350, 353–374, 377–398, 403–424, 427–447, 463–484, 486–507, 512–534, 537–558, 559–580, and 585–594; these read DLRFLDMSQNQFQYLPDGFLRK, SLSHLNLHQNCLMTLHIREHEP, ALTELDLSHNQLSELHLAPGLA, SLRLFNLSSNQLLGVPPGLFAN, NITTLDMSHNQISLCPLPAAS, SLRSLSLEGCGLGALPDCPFQG, SLTYLDLSSNWGVLNGSLAPLQ, MLQVLSLRNMGLHSSFMALDFSG, NLRDLDLSGNCLTTFPRFGGSL, ALETLDLRRNSLTALPQKAVSE, and GLRTIYLSQN. 2 N-linked (GlcNAc...) asparagine glycosylation sites follow: asparagine 408 and asparagine 427. N-linked (GlcNAc...) asparagine glycosylation occurs at asparagine 500. In terms of domain architecture, LRRCT spans 595 to 643; it reads PYDCCGVDGWGALQHGQTVADWAMVTCNLSSKIIRVTELPGGVPRDCKW. Asparagine 622 carries N-linked (GlcNAc...) asparagine glycosylation. A helical transmembrane segment spans residues 651–671; sequence LYLVLILPSCLTLLVACTVIV. At 672–692 the chain is on the cytoplasmic side; sequence LTFKKPLLQVIKSRCHWSSVY.

Belongs to the LRRC32/LRRC33 family. As to quaternary structure, interacts with TGFB1; associates via disulfide bonds with the Latency-associated peptide chain (LAP) regulatory chain of TGFB1, leading to regulate activation of TGF-beta-1. Interacts (via LRR repeats) with TLR2, TLR3, TLR4, TLR9 and probably other Toll-like receptors. Interacts with CYBB/NOX2; the interaction is direct. In terms of tissue distribution, mainly expressed in cells of hematopoietic origin. Highly expressed in bone marrow, thymus, liver, lung, intestine and spleen. In the brain, highly expressed in microglia.

Its subcellular location is the cell membrane. It localises to the endoplasmic reticulum membrane. In terms of biological role, key regulator of transforming growth factor beta-1 (TGFB1) specifically required for microglia function in the nervous system. Required for activation of latent TGF-beta-1 in macrophages and microglia: associates specifically via disulfide bonds with the Latency-associated peptide (LAP), which is the regulatory chain of TGFB1, and regulates integrin-dependent activation of TGF-beta-1. TGF-beta-1 activation mediated by LRRC33/NRROS is highly localized: there is little spreading of TGF-beta-1 activated from one microglial cell to neighboring microglia, suggesting the existence of localized and selective activation of TGF-beta-1 by LRRC33/NRROS. Indirectly plays a role in Toll-like receptor (TLR) signaling: ability to inhibit TLR-mediated NF-kappa-B activation and cytokine production is probably a consequence of its role in TGF-beta-1 signaling. The protein is Transforming growth factor beta activator LRRC33 of Homo sapiens (Human).